A 63-amino-acid polypeptide reads, in one-letter code: Beta-defensin 38 (63 aa).

The signal sequence occupies residues 1 to 21 (MKISCFLLLILSLYFFQINQA). 3 disulfides stabilise this stretch: cysteine 29–cysteine 58, cysteine 36–cysteine 51, and cysteine 41–cysteine 59.

Belongs to the beta-defensin family. As to expression, only expressed in epididymis (caput, corpus and cauda).

Its subcellular location is the secreted. Its function is as follows. Synthetic Defb38 kills both Gram-negative (E.coli and P.aeruginosa) and Gram-positive (E.faecium) bacteria. The chain is Beta-defensin 38 (Defb38) from Mus musculus (Mouse).